A 63-amino-acid polypeptide reads, in one-letter code: SERF-like protein C1705.02 (63 aa).

The segment covering 1-13 (MSRGNQRDVDRAR) has biased composition (basic and acidic residues). Residues 1–63 (MSRGNQRDVD…EANGGSKGKK (63 aa)) form a disordered region. The segment covering 14 to 24 (NLKKSQASKKK) has biased composition (basic residues). Residues 25–35 (QAGDPTKRLEA) show a composition bias toward basic and acidic residues.

It belongs to the SERF family.

It is found in the cytoplasm. The protein resides in the nucleus. The protein localises to the nucleolus. The chain is SERF-like protein C1705.02 from Schizosaccharomyces pombe (strain 972 / ATCC 24843) (Fission yeast).